The sequence spans 385 residues: Chaperone protein DnaJ (385 aa).

The 66-residue stretch at 5–70 (DYYEVLGVAK…QKRAAYDRYG (66 aa)) folds into the J domain. The segment at 145 to 223 (GFDTEIRVPS…CDGVGRTRRN (79 aa)) adopts a CR-type zinc-finger fold. Zn(2+) is bound by residues Cys-158, Cys-161, Cys-175, Cys-178, Cys-197, Cys-200, Cys-211, and Cys-214. 4 CXXCXGXG motif repeats span residues 158-165 (CDTCHGSG), 175-182 (CRTCGGSG), 197-204 (CPTCHGTG), and 211-218 (CPSCDGVG).

Belongs to the DnaJ family. In terms of assembly, homodimer. Requires Zn(2+) as cofactor.

Its subcellular location is the cytoplasm. Functionally, participates actively in the response to hyperosmotic and heat shock by preventing the aggregation of stress-denatured proteins and by disaggregating proteins, also in an autonomous, DnaK-independent fashion. Unfolded proteins bind initially to DnaJ; upon interaction with the DnaJ-bound protein, DnaK hydrolyzes its bound ATP, resulting in the formation of a stable complex. GrpE releases ADP from DnaK; ATP binding to DnaK triggers the release of the substrate protein, thus completing the reaction cycle. Several rounds of ATP-dependent interactions between DnaJ, DnaK and GrpE are required for fully efficient folding. Also involved, together with DnaK and GrpE, in the DNA replication of plasmids through activation of initiation proteins. This is Chaperone protein DnaJ from Bordetella pertussis (strain Tohama I / ATCC BAA-589 / NCTC 13251).